Here is a 151-residue protein sequence, read N- to C-terminus: Neuroglobin (151 aa).

Residues 1-149 enclose the Globin domain; the sequence is MERPESELIR…VVQAMSRGWD (149 aa). Heme b contacts are provided by His64 and His96.

Belongs to the globin family. In terms of assembly, monomer. Homodimer and homotetramer; disulfide-linked. Mainly monomeric but also detected as part of homodimers and homotetramers. Interacts with 14-3-3 proteins; regulates the phosphorylation of NGB. Could interact (ferrous form) with G-alpha(i) proteins (GTP-bound form). In terms of processing, phosphorylated during hypoxia by ERK1/ERK2. Phosphorylation regulates the heme pocket hexacoordination preventing the association of His-64 with the heme metal center. Thereby, promotes the access of dioxygen and nitrite to the heme and stimulates the nitrite reductase activity. Phosphorylation during hypoxia is stabilized by 14-3-3 proteins. As to expression, widely distributed throughout the adult brain, including cerebral cortex, hippocampus, thalamus, hypothalamus, olfactory bulb, and cerebellum.

The protein resides in the cytoplasm. It is found in the cytosol. The protein localises to the mitochondrion matrix. The enzyme catalyses Fe(III)-heme b-[protein] + nitric oxide + H2O = Fe(II)-heme b-[protein] + nitrite + 2 H(+). Functionally, monomeric globin with a bis-histidyl six-coordinate heme-iron atom through which it can bind dioxygen, carbon monoxide and nitric oxide. Could help transport oxygen and increase its availability to the metabolically active neuronal tissues, though its low quantity in tissues as well as its high affinity for dioxygen, which may limit its oxygen-releasing ability, argue against it. The ferrous/deoxygenated form exhibits a nitrite reductase activity and it could produce nitric oxide which in turn inhibits cellular respiration in response to hypoxia. In its ferrous/deoxygenated state, it may also exhibit GDI (Guanine nucleotide Dissociation Inhibitor) activity toward heterotrimeric G-alpha proteins, thereby regulating signal transduction to facilitate neuroprotective responses in the wake of hypoxia and associated oxidative stress. The protein is Neuroglobin of Rattus norvegicus (Rat).